The chain runs to 271 residues: Putative phosphoenolpyruvate synthase regulatory protein (271 aa).

G152–T159 contributes to the ADP binding site.

This sequence belongs to the pyruvate, phosphate/water dikinase regulatory protein family. PSRP subfamily.

The enzyme catalyses [pyruvate, water dikinase] + ADP = [pyruvate, water dikinase]-phosphate + AMP + H(+). It catalyses the reaction [pyruvate, water dikinase]-phosphate + phosphate + H(+) = [pyruvate, water dikinase] + diphosphate. Functionally, bifunctional serine/threonine kinase and phosphorylase involved in the regulation of the phosphoenolpyruvate synthase (PEPS) by catalyzing its phosphorylation/dephosphorylation. In Dichelobacter nodosus (strain VCS1703A), this protein is Putative phosphoenolpyruvate synthase regulatory protein.